The following is a 418-amino-acid chain: rRNA methyltransferase 3, mitochondrial (418 aa).

The transit peptide at 1 to 40 (MAAPAKGMWCSLGSLLRVVQTRDLNARRWVRALRRSPVRV) directs the protein to the mitochondrion. Residues 41–90 (LSPSGQVEERKRAPDQQPRKAVPKASSQGQRQKQPLETSPSQTPHTWEEA) form a disordered region. The segment covering 47 to 58 (VEERKRAPDQQP) has biased composition (basic and acidic residues). The segment covering 65 to 85 (ASSQGQRQKQPLETSPSQTPH) has biased composition (polar residues). Residues G354, I378, and L387 each contribute to the S-adenosyl-L-methionine site.

Belongs to the class IV-like SAM-binding methyltransferase superfamily. RNA methyltransferase TrmH family.

It is found in the mitochondrion. The enzyme catalyses guanosine(1370) in 16S rRNA + S-adenosyl-L-methionine = 2'-O-methylguanosine(1370) in 16S rRNA + S-adenosyl-L-homocysteine + H(+). Its function is as follows. S-adenosyl-L-methionine-dependent 2'-O-ribose methyltransferase that catalyzes the formation of 2'-O-methylguanosine at position 1370 (Gm1370) in the 16S mitochondrial large subunit ribosomal RNA (mtLSU rRNA), a conserved modification in the peptidyl transferase domain of the mtLSU rRNA. Also required for formation of 2'-O-methyluridine at position 1369 (Um1369) mediated by MRM2. This chain is rRNA methyltransferase 3, mitochondrial, found in Mus musculus (Mouse).